We begin with the raw amino-acid sequence, 170 residues long: MSQAGTGVCGNGGQEDSAAAGPFSFSPEPTLEDIRRLHAEFAAERDWEQFHQPRNLLLALVGEVGELAELFQWKSDAEPGPQAWQPKERAALQEELSDVLIYLVALAARCHVDLPRAVISKMDTNRQRYPVHLSRGSACKYTDLPRGTLSENEAVGSGDPASELGNQAST.

Residues 1-25 (MSQAGTGVCGNGGQEDSAAAGPFSF) are disordered. An N-acetylserine modification is found at Ser-2. The residue at position 2 (Ser-2) is a Phosphoserine. Substrate-binding positions include His-38 and 47-51 (WEQFH). Mg(2+)-binding residues include Glu-63 and Glu-66. A substrate-binding site is contributed by Trp-73. Residues Glu-95 and Asp-98 each contribute to the Mg(2+) site. Position 102 (Tyr-102) interacts with substrate. The disordered stretch occupies residues 149-170 (LSENEAVGSGDPASELGNQAST).

In terms of assembly, homotetramer. Mg(2+) serves as cofactor.

The protein resides in the cytoplasm. The protein localises to the cytosol. The enzyme catalyses dCTP + H2O = dCMP + diphosphate + H(+). In terms of biological role, hydrolyzes deoxynucleoside triphosphates (dNTPs) to the corresponding nucleoside monophosphates. Has a strong preference for dCTP and its analogs including 5-iodo-dCTP and 5-methyl-dCTP for which it may even have a higher efficiency. May protect DNA or RNA against the incorporation of these genotoxic nucleotide analogs through their catabolism. In Rattus norvegicus (Rat), this protein is dCTP pyrophosphatase 1.